The following is a 445-amino-acid chain: RCC1 domain-containing protein RUG3, mitochondrial (445 aa).

Residues 1–22 (MAALSHRLRSFTRRFSSTRTTQ) constitute a mitochondrion transit peptide. 7 RCC1 repeats span residues 47 to 101 (TLQL…DSSS), 118 to 169 (DGDL…ALTH), 171 to 221 (GDVF…AITE), 222 to 279 (SGEL…ALTK), 280 to 331 (EGQL…ALTE), 333 to 383 (GKVL…AITD), and 385 to 442 (GELW…CLVS).

Interacts with ATM. Mostly expressed in roots and rosette leaves of young seedlings, and, to a lower extent, in the flowers and siliques of mature plants. Preferentially expressed in the vascular tissues.

The protein resides in the mitochondrion. Its function is as follows. Regulates DNA damage response (DDR) synergistically with ATM. Together with ATM, involved in the splicing of the ND2/NAD2 mRNA. Required for the accumulation of mitochondrial respiratory chain complex I. Negative regulator of plant responses to abscisic acid (ABA). May have a pivotal role in vegetative growth and the phase transition from vegetative to reproductive growth. The protein is RCC1 domain-containing protein RUG3, mitochondrial of Arabidopsis thaliana (Mouse-ear cress).